The sequence spans 455 residues: GTPase Der (455 aa).

EngA-type G domains lie at 4–169 (PIVA…PPKH) and 178–353 (IQMA…EQHR). Residues 10–17 (GRPNVGKS), 57–61 (DTGGL), 120–123 (NKCE), 184–191 (GRPNVGKS), 231–235 (DTAGI), and 296–299 (NKWD) contribute to the GTP site. A KH-like domain is found at 354–439 (RRVSTSVVNE…PLKLFWRGKQ (86 aa)).

The protein belongs to the TRAFAC class TrmE-Era-EngA-EngB-Septin-like GTPase superfamily. EngA (Der) GTPase family. Associates with the 50S ribosomal subunit.

Functionally, GTPase that plays an essential role in the late steps of ribosome biogenesis. The polypeptide is GTPase Der (Prochlorococcus marinus (strain MIT 9313)).